Reading from the N-terminus, the 201-residue chain is UPF0301 protein MMAR_0053 (201 aa).

Belongs to the UPF0301 (AlgH) family.

This chain is UPF0301 protein MMAR_0053, found in Mycobacterium marinum (strain ATCC BAA-535 / M).